The primary structure comprises 244 residues: tRNA (guanine-N(7)-)-methyltransferase (244 aa).

Over residues 1 to 10 (MSDTPQSPAQ) the composition is skewed to polar residues. Residues 1–20 (MSDTPQSPAQDSLAEHDEAR) are disordered. The S-adenosyl-L-methionine site is built by Glu-74, Glu-99, Asp-126, and Asp-149. Asp-149 is an active-site residue. Substrate is bound by residues Lys-153, Asp-185, and 222–225 (TKFE).

This sequence belongs to the class I-like SAM-binding methyltransferase superfamily. TrmB family.

The catalysed reaction is guanosine(46) in tRNA + S-adenosyl-L-methionine = N(7)-methylguanosine(46) in tRNA + S-adenosyl-L-homocysteine. It participates in tRNA modification; N(7)-methylguanine-tRNA biosynthesis. Catalyzes the formation of N(7)-methylguanine at position 46 (m7G46) in tRNA. The chain is tRNA (guanine-N(7)-)-methyltransferase from Pseudomonas aeruginosa (strain ATCC 15692 / DSM 22644 / CIP 104116 / JCM 14847 / LMG 12228 / 1C / PRS 101 / PAO1).